Reading from the N-terminus, the 342-residue chain is L-threonine 3-dehydrogenase (342 aa).

Position 38 (Cys-38) interacts with Zn(2+). Catalysis depends on charge relay system residues Thr-40 and His-43. Residues His-63 and Glu-64 each contribute to the Zn(2+) site. Residues Ile-175, Asp-195, Arg-200, 263–265 (LGI), and 287–288 (VY) each bind NAD(+).

This sequence belongs to the zinc-containing alcohol dehydrogenase family. In terms of assembly, homotetramer. Zn(2+) serves as cofactor.

It is found in the cytoplasm. It carries out the reaction L-threonine + NAD(+) = (2S)-2-amino-3-oxobutanoate + NADH + H(+). It participates in amino-acid degradation; L-threonine degradation via oxydo-reductase pathway; glycine from L-threonine: step 1/2. Functionally, catalyzes the NAD(+)-dependent oxidation of L-threonine to 2-amino-3-ketobutyrate. The protein is L-threonine 3-dehydrogenase of Ruegeria pomeroyi (strain ATCC 700808 / DSM 15171 / DSS-3) (Silicibacter pomeroyi).